The chain runs to 376 residues: Fibromodulin (376 aa).

The N-terminal stretch at 1–18 is a signal peptide; it reads MQWASILLLAGLCSLSWA. At glutamine 19 the chain carries Pyrrolidone carboxylic acid. Sulfotyrosine is present on residues tyrosine 20, tyrosine 38, tyrosine 45, tyrosine 47, tyrosine 50, tyrosine 53, tyrosine 55, tyrosine 63, and tyrosine 65. Residues 67-105 enclose the LRRNT domain; sequence SPPQPEPRDCPQECDCPPNFPTAMYCDNRNLKYLPFVPS. 8 LRR repeats span residues 106-127, 130-151, 156-176, 177-198, 201-222, 224-245, 246-266, and 269-289; these read RMKY…VFDN, GLLW…KKVF, HLER…PLPR, SLRE…ALEG, NLTA…MKGL, SLIL…LPSA, LEQL…YFRG, and KLLY…ASNT. The N-linked (GlcNAc...) (keratan sulfate) asparagine glycan is linked to asparagine 127. The N-linked (GlcNAc...) (keratan sulfate) asparagine glycan is linked to asparagine 166. The N-linked (GlcNAc...) (keratan sulfate) asparagine glycan is linked to asparagine 201. Residue asparagine 291 is glycosylated (N-linked (GlcNAc...) (keratan sulfate) asparagine). LRR repeat units follow at residues 294 to 315 and 316 to 335; these read SLLE…STNL and ENLY…SFCT. Cysteine 334 and cysteine 367 form a disulfide bridge. N-linked (GlcNAc...) asparagine glycosylation is present at asparagine 341. One copy of the LRR 11 repeat lies at 344 to 365; it reads KLQVLRLDGNEIKRSAMPADAP.

It belongs to the small leucine-rich proteoglycan (SLRP) family. SLRP class II subfamily. Binds to type I and type II collagen. Binds keratan sulfate chains.

Its subcellular location is the secreted. It localises to the extracellular space. The protein localises to the extracellular matrix. Its function is as follows. Affects the rate of fibrils formation. May have a primary role in collagen fibrillogenesis. The polypeptide is Fibromodulin (FMOD) (Bos taurus (Bovine)).